We begin with the raw amino-acid sequence, 82 residues long: Fibroblast growth factor 8 (82 aa).

Residue Asn68 is glycosylated (N-linked (GlcNAc...) asparagine).

Belongs to the heparin-binding growth factors family. As to quaternary structure, monomer. Homodimer. Interacts with FGFR1, FGFR2, FGFR3 and FGFR4. Affinity between fibroblast growth factors (FGFs) and their receptors is increased by heparan sulfate glycosaminoglycans that function as coreceptors.

Its subcellular location is the secreted. Functionally, plays an important role in the regulation of embryonic development, cell proliferation, cell differentiation and cell migration. Required for normal brain, eye, ear and limb development during embryogenesis. Required for normal development of the gonadotropin-releasing hormone (GnRH) neuronal system. Plays a role in neurite outgrowth in hippocampal cells. The chain is Fibroblast growth factor 8 (FGF8) from Canis lupus familiaris (Dog).